The chain runs to 252 residues: Zinc import ATP-binding protein ZnuC (252 aa).

Residues 5 to 220 (VTLNKISVTF…PEFIAMFGQR (216 aa)) form the ABC transporter domain. ATP is bound at residue 37–44 (GPNGAGKS).

It belongs to the ABC transporter superfamily. Zinc importer (TC 3.A.1.15.5) family. As to quaternary structure, the complex is composed of two ATP-binding proteins (ZnuC), two transmembrane proteins (ZnuB) and a solute-binding protein (ZnuA).

The protein localises to the cell inner membrane. The catalysed reaction is Zn(2+)(out) + ATP(in) + H2O(in) = Zn(2+)(in) + ADP(in) + phosphate(in) + H(+)(in). Its function is as follows. Part of the ABC transporter complex ZnuABC involved in zinc import. Responsible for energy coupling to the transport system. The sequence is that of Zinc import ATP-binding protein ZnuC from Yersinia enterocolitica serotype O:8 / biotype 1B (strain NCTC 13174 / 8081).